The following is a 536-amino-acid chain: MHWHGLSQSTAPFSDGSPQASQWPIKPGEYFDYEIRPNVGEAGTHFYHSHVGFQAVSAAGPLIVEEKHGKSPPFPYDEERILFISELYNKTDSMTETELLRPYDVVRCFPGMSANETDTPEPWVMPDPSLVESCGPEVIQVDPDKTYRMRVIGGPALNLVTMGFEDHQELSIMAADGKYTKLAKTERIQIASGQRFDFLLHTKTEDELRRLGKSAFWIQMESRYRPMNVSSYALLSYNTPSDLAFNQTTDLVPPEKQPLTLPNKVYDWLEYVLEPLEPNGFPTADKVNRTVVLTSLQLIAKEGVYAAVSNRTWTETNQHRNNTPFWKREHQAGTPYLVDIFRRGDEAIPDYETTVQKHGGWDPDLNVYVAKVGEVIDIIMVNQPNGLDIGFDLHPWHIHGGHIYDLGSGPGSYNATANEEKLKGYNPVIRDTTMLYKYTPGQYVGENKNFTDQGWRAWRLHVQDPGVWMVHCHTLQHMIMGMQTVWMMGNASEITRGVSPESLEGYLNYGGDAYGNASYDPIVQHHFDYGLQQILQ.

A disordered region spans residues 1 to 21 (MHWHGLSQSTAPFSDGSPQAS). Plastocyanin-like domains follow at residues 1–67 (MHWH…VEEK), 79–238 (ERIL…LSYN), and 354–488 (TVQK…VWMM). Cu cation is bound by residues His-2, His-4, His-48, and His-50. His-397 contributes to the Cu cation binding site.

This sequence belongs to the multicopper oxidase family.

Its pathway is secondary metabolite biosynthesis. Multicopper oxidase; part of the gene cluster that mediates the biosynthesis of terrein, a fungal metabolite with ecological, antimicrobial, antiproliferative, and antioxidative activities. The first step in the pathway is performed by the polyketide synthase terA that produces 4-hydroxy-6-methylpyranon (4-HMP), orsellinic acid (OA), and 2,3-dehydro-6-hydroxymellein (2,3-dehydro-6-HM) by condensing acetyl-CoA with two, three, or four malonyl-CoA units, respectively. 4-HMP and OA are not pathway intermediates, but are rather shunt or side products. 2,3-dehydro-6-HM is further converted to 6-hydroxymellein (6-HM) by the 6-hydroxymellein synthase terB. The monooxygenases terC and terD, the multicopper oxidase terE and the Kelch-like protein terF are then involved in the transformation of 6-HM to terrein. Even if they are co-regulated with the other terrein cluster genes, terH and terI seem to be dispensable for terrein production; whereas one or both of the 2 transporters terG and terJ are probably required for efficient secretion of metabolites. This chain is Multicopper oxidase terE, found in Aspergillus terreus (strain NIH 2624 / FGSC A1156).